A 338-amino-acid chain; its full sequence is Heat-inducible transcription repressor HrcA (338 aa).

The protein belongs to the HrcA family.

Its function is as follows. Negative regulator of class I heat shock genes (grpE-dnaK-dnaJ and groELS operons). Prevents heat-shock induction of these operons. The polypeptide is Heat-inducible transcription repressor HrcA (Thermotoga petrophila (strain ATCC BAA-488 / DSM 13995 / JCM 10881 / RKU-1)).